Here is a 526-residue protein sequence, read N- to C-terminus: ATP synthase subunit alpha (526 aa).

171 to 178 (GDRQTGKT) contacts ATP.

This sequence belongs to the ATPase alpha/beta chains family. F-type ATPases have 2 components, CF(1) - the catalytic core - and CF(0) - the membrane proton channel. CF(1) has five subunits: alpha(3), beta(3), gamma(1), delta(1), epsilon(1). CF(0) has four main subunits: a, b, b' and c.

It is found in the cell inner membrane. The enzyme catalyses ATP + H2O + 4 H(+)(in) = ADP + phosphate + 5 H(+)(out). In terms of biological role, produces ATP from ADP in the presence of a proton gradient across the membrane. The alpha chain is a regulatory subunit. The sequence is that of ATP synthase subunit alpha from Chlorobium phaeobacteroides (strain BS1).